The primary structure comprises 378 residues: VQNPGASAIQCRAAVLRKEGQPMKIEQVLIQAPGPNQVRVKMVSSGLCATDAHLVWGEQKISDLGGIGCPAIAGHEGAGIVESVGENVTEFVPGDSVLTSFQPQCGQCESCLRPSTNICKKYDLIKSTTDVSTARTLDGQPITSLFGLGVYSEYITTTEHHVFKVNKAANLEHASIISCSVGTGFYSATNLAAVYEGSTCAVWGLGGIGINTLFGCKYNKAKHIIGIDVNEDKREIAAEFGCTEFINPKTLGQPVEQYLMDKFGGVDFAFDCVGYKPILDQAAVSLAIDGTMVIIGAAAKEVKFEMPAFNFLFNRKVVGGLLGSKKTKVAYQELCDMYVDGTYDVDRLVSNKFSLDQINEAFQTLKDGNCIRSIVVFK.

Residues C48, H75, C105, C108, C111, C119, and C179 each coordinate Zn(2+).

Belongs to the zinc-containing alcohol dehydrogenase family. Monomer. Zn(2+) is required as a cofactor.

It catalyses the reaction (2E)-geraniol + NAD(+) = (2E)-geranial + NADH + H(+). The catalysed reaction is (2E,6E)-farnesol + NAD(+) = (2E,6E)-farnesal + NADH + H(+). In terms of biological role, catalyzes the NAD(+)-dependent oxidation of geraniol to geranial, playing an important role in the biosynthesis of neral, an alarm pheromone. Cannot use NADP(+). Also acts as a farnesol dehydrogenase by catalyzing the oxidation of (2E,6E)-farnesol to (2E,6E)-farnesal, with lower activity compared to geraniol dehydrogenase activity. In Carpoglyphus lactis (Dried fruit mite), this protein is Geraniol dehydrogenase.